Reading from the N-terminus, the 227-residue chain is Cytochrome c oxidase subunit 2 (227 aa).

Topologically, residues 1 to 14 (MAHSFQLGFQDATS) are mitochondrial intermembrane. The helical transmembrane segment at 15-45 (PIMEELLHFHDHTLMIVFLISSLVLYIITLM) threads the bilayer. The Mitochondrial matrix portion of the chain corresponds to 46–59 (LTTKLTHTSTMDAQ). Residues 60-87 (EVETVWTILPAIILILIALPSLRILYLM) form a helical membrane-spanning segment. The Mitochondrial intermembrane portion of the chain corresponds to 88–227 (DEINTPSLTV…HFENWSTSMI (140 aa)). Cu cation is bound by residues H161, C196, E198, C200, H204, and M207. E198 is a Mg(2+) binding site.

Belongs to the cytochrome c oxidase subunit 2 family. In terms of assembly, component of the cytochrome c oxidase (complex IV, CIV), a multisubunit enzyme composed of 14 subunits. The complex is composed of a catalytic core of 3 subunits MT-CO1, MT-CO2 and MT-CO3, encoded in the mitochondrial DNA, and 11 supernumerary subunits COX4I, COX5A, COX5B, COX6A, COX6B, COX6C, COX7A, COX7B, COX7C, COX8 and NDUFA4, which are encoded in the nuclear genome. The complex exists as a monomer or a dimer and forms supercomplexes (SCs) in the inner mitochondrial membrane with NADH-ubiquinone oxidoreductase (complex I, CI) and ubiquinol-cytochrome c oxidoreductase (cytochrome b-c1 complex, complex III, CIII), resulting in different assemblies (supercomplex SCI(1)III(2)IV(1) and megacomplex MCI(2)III(2)IV(2)). Found in a complex with TMEM177, COA6, COX18, COX20, SCO1 and SCO2. Interacts with TMEM177 in a COX20-dependent manner. Interacts with COX20. Interacts with COX16. It depends on Cu cation as a cofactor.

The protein resides in the mitochondrion inner membrane. It carries out the reaction 4 Fe(II)-[cytochrome c] + O2 + 8 H(+)(in) = 4 Fe(III)-[cytochrome c] + 2 H2O + 4 H(+)(out). In terms of biological role, component of the cytochrome c oxidase, the last enzyme in the mitochondrial electron transport chain which drives oxidative phosphorylation. The respiratory chain contains 3 multisubunit complexes succinate dehydrogenase (complex II, CII), ubiquinol-cytochrome c oxidoreductase (cytochrome b-c1 complex, complex III, CIII) and cytochrome c oxidase (complex IV, CIV), that cooperate to transfer electrons derived from NADH and succinate to molecular oxygen, creating an electrochemical gradient over the inner membrane that drives transmembrane transport and the ATP synthase. Cytochrome c oxidase is the component of the respiratory chain that catalyzes the reduction of oxygen to water. Electrons originating from reduced cytochrome c in the intermembrane space (IMS) are transferred via the dinuclear copper A center (CU(A)) of subunit 2 and heme A of subunit 1 to the active site in subunit 1, a binuclear center (BNC) formed by heme A3 and copper B (CU(B)). The BNC reduces molecular oxygen to 2 water molecules using 4 electrons from cytochrome c in the IMS and 4 protons from the mitochondrial matrix. This chain is Cytochrome c oxidase subunit 2 (MT-CO2), found in Cephalopachus bancanus (Western tarsier).